Consider the following 315-residue polypeptide: Putative quercetin 2,3-dioxygenase PA1205 (315 aa).

Residues His-77, His-79, His-121, and Glu-123 each coordinate a divalent metal cation.

It belongs to the pirin family. A divalent metal cation serves as cofactor.

The enzyme catalyses quercetin + O2 = 2-(3,4-dihydroxybenzoyloxy)-4,6-dihydroxybenzoate + CO. It participates in flavonoid metabolism; quercetin degradation. Its function is as follows. Putative quercetin 2,3-dioxygenase. This chain is Putative quercetin 2,3-dioxygenase PA1205, found in Pseudomonas aeruginosa (strain ATCC 15692 / DSM 22644 / CIP 104116 / JCM 14847 / LMG 12228 / 1C / PRS 101 / PAO1).